The primary structure comprises 529 residues: Bifunctional purine biosynthesis protein PurH (529 aa).

The region spanning 1–148 is the MGS-like domain; the sequence is MQQRRPVRRA…KNHKDVAIVV (148 aa).

This sequence belongs to the PurH family.

It carries out the reaction (6R)-10-formyltetrahydrofolate + 5-amino-1-(5-phospho-beta-D-ribosyl)imidazole-4-carboxamide = 5-formamido-1-(5-phospho-D-ribosyl)imidazole-4-carboxamide + (6S)-5,6,7,8-tetrahydrofolate. The enzyme catalyses IMP + H2O = 5-formamido-1-(5-phospho-D-ribosyl)imidazole-4-carboxamide. Its pathway is purine metabolism; IMP biosynthesis via de novo pathway; 5-formamido-1-(5-phospho-D-ribosyl)imidazole-4-carboxamide from 5-amino-1-(5-phospho-D-ribosyl)imidazole-4-carboxamide (10-formyl THF route): step 1/1. The protein operates within purine metabolism; IMP biosynthesis via de novo pathway; IMP from 5-formamido-1-(5-phospho-D-ribosyl)imidazole-4-carboxamide: step 1/1. The sequence is that of Bifunctional purine biosynthesis protein PurH from Klebsiella pneumoniae (strain 342).